The chain runs to 243 residues: Adenosylcobinamide-GDP ribazoletransferase (243 aa).

The next 5 helical transmembrane spans lie at 31-48 (LLFY…LWVL), 61-81 (AALL…DGLA), 109-129 (IAVV…VALI), 134-154 (GFAL…LFLC), and 188-208 (LLLG…LFFW).

This sequence belongs to the CobS family. Mg(2+) is required as a cofactor.

Its subcellular location is the cell inner membrane. The catalysed reaction is alpha-ribazole + adenosylcob(III)inamide-GDP = adenosylcob(III)alamin + GMP + H(+). It catalyses the reaction alpha-ribazole 5'-phosphate + adenosylcob(III)inamide-GDP = adenosylcob(III)alamin 5'-phosphate + GMP + H(+). The protein operates within cofactor biosynthesis; adenosylcobalamin biosynthesis; adenosylcobalamin from cob(II)yrinate a,c-diamide: step 7/7. In terms of biological role, joins adenosylcobinamide-GDP and alpha-ribazole to generate adenosylcobalamin (Ado-cobalamin). Also synthesizes adenosylcobalamin 5'-phosphate from adenosylcobinamide-GDP and alpha-ribazole 5'-phosphate. This Pseudomonas fluorescens (strain ATCC BAA-477 / NRRL B-23932 / Pf-5) protein is Adenosylcobinamide-GDP ribazoletransferase.